A 471-amino-acid polypeptide reads, in one-letter code: MGGAVVDEGPTGIKAPDGGWGWAVLFGCFIITGFSYAFPKAVSVFFKELMHEFGIGYSDTAWISSILLAMLYGTGPLCSMCVNRFGCRPVMLVGGLFASLGMVAASFCRSIIQIYLTTGVITGLGLALNFQPSLIMLNRYFNKRRPMANGLAAAGSPVFLCALSPLGQLLQDHYGWRGGFLILGGLLLNCCVCAALMRPLVAPQASGGAEPHGPQRPSPRLLDLSVFRDRGFLIYAVAASIMVLGLFVPPVFVVSYAKDMGVPDTKAAFLLTILGFIDIFARPTAGFITGLKKVRPYSVYLFSFAMFFNGFTDLTGSTASDYGGLVVFCIFFGISYGMVGALQFEVLMAIVGTQKFSSAIGLVLLLEAVAVLIGPPSGGKLLDATKVYKYVFILAGAEVLTSSLVLLLGNFFCIGKRKRPEVTKPEEVASEEEKLHKPPVDVRVDSREVEHFLKAEPEKNGEVVHTPETSV.

Topologically, residues 1 to 17 (MGGAVVDEGPTGIKAPD) are cytoplasmic. A helical membrane pass occupies residues 18 to 38 (GGWGWAVLFGCFIITGFSYAF). Residues 39–61 (PKAVSVFFKELMHEFGIGYSDTA) are Extracellular-facing. Residues 62–82 (WISSILLAMLYGTGPLCSMCV) form a helical membrane-spanning segment. Residues 83–84 (NR) are Cytoplasmic-facing. The chain crosses the membrane as a helical span at residues 85–105 (FGCRPVMLVGGLFASLGMVAA). Topologically, residues 106-109 (SFCR) are extracellular. A helical transmembrane segment spans residues 110 to 130 (SIIQIYLTTGVITGLGLALNF). Over 131–149 (QPSLIMLNRYFNKRRPMAN) the chain is Cytoplasmic. A helical transmembrane segment spans residues 150–170 (GLAAAGSPVFLCALSPLGQLL). Topologically, residues 171 to 179 (QDHYGWRGG) are extracellular. The helical transmembrane segment at 180–200 (FLILGGLLLNCCVCAALMRPL) threads the bilayer. Residues 201 to 231 (VAPQASGGAEPHGPQRPSPRLLDLSVFRDRG) lie on the Cytoplasmic side of the membrane. Residues 232-252 (FLIYAVAASIMVLGLFVPPVF) traverse the membrane as a helical segment. Topologically, residues 253-267 (VVSYAKDMGVPDTKA) are extracellular. The chain crosses the membrane as a helical span at residues 268–288 (AFLLTILGFIDIFARPTAGFI). The Cytoplasmic portion of the chain corresponds to 289 to 298 (TGLKKVRPYS). The chain crosses the membrane as a helical span at residues 299–319 (VYLFSFAMFFNGFTDLTGSTA). Over 320 to 321 (SD) the chain is Extracellular. The chain crosses the membrane as a helical span at residues 322–342 (YGGLVVFCIFFGISYGMVGAL). Topologically, residues 343–355 (QFEVLMAIVGTQK) are cytoplasmic. A helical transmembrane segment spans residues 356–376 (FSSAIGLVLLLEAVAVLIGPP). The Extracellular segment spans residues 377 to 391 (SGGKLLDATKVYKYV). The helical transmembrane segment at 392 to 412 (FILAGAEVLTSSLVLLLGNFF) threads the bilayer. Residues 413–471 (CIGKRKRPEVTKPEEVASEEEKLHKPPVDVRVDSREVEHFLKAEPEKNGEVVHTPETSV) are Cytoplasmic-facing. Basolateral sorting signal regions lie at residues 429–447 (ASEE…VDSR) and 447–471 (REVE…ETSV). At S430 the chain carries Phosphoserine. T466 carries the post-translational modification Phosphothreonine. Phosphoserine is present on S470.

This sequence belongs to the major facilitator superfamily. Monocarboxylate porter (TC 2.A.1.13) family. Interacts with BSG; interaction mediates SLC16A3 targeting to the plasma membrane. As to expression, detected in testis, small intestine, parotid gland, lung and brain. Small amounts are detected in heart, kidney and spleen. Expressed in skeletal muscle.

It localises to the cell membrane. Its subcellular location is the basolateral cell membrane. The catalysed reaction is (S)-lactate(in) + H(+)(in) = (S)-lactate(out) + H(+)(out). It carries out the reaction pyruvate(out) + H(+)(out) = pyruvate(in) + H(+)(in). In terms of biological role, proton-dependent transporter of monocarboxylates such as L-lactate and pyruvate. Plays a predominant role in the L-lactate efflux from highly glycolytic cells. The protein is Monocarboxylate transporter 4 (Slc16a3) of Rattus norvegicus (Rat).